The sequence spans 368 residues: Methionine import ATP-binding protein MetN (368 aa).

A compositionally biased stretch (polar residues) spans 1 to 14 (MASDAQPSVDQPSA). Positions 1–27 (MASDAQPSVDQPSAGTPGATGNSTGTT) are disordered. The segment covering 15 to 27 (GTPGATGNSTGTT) has biased composition (low complexity). The 240-residue stretch at 31–270 (IVFRDVTKIF…PQTKTAANFV (240 aa)) folds into the ABC transporter domain. 67–74 (GYSGAGKS) contacts ATP.

This sequence belongs to the ABC transporter superfamily. Methionine importer (TC 3.A.1.24) family. As to quaternary structure, the complex is composed of two ATP-binding proteins (MetN), two transmembrane proteins (MetI) and a solute-binding protein (MetQ).

It localises to the cell membrane. The enzyme catalyses L-methionine(out) + ATP + H2O = L-methionine(in) + ADP + phosphate + H(+). It catalyses the reaction D-methionine(out) + ATP + H2O = D-methionine(in) + ADP + phosphate + H(+). In terms of biological role, part of the ABC transporter complex MetNIQ involved in methionine import. Responsible for energy coupling to the transport system. This chain is Methionine import ATP-binding protein MetN, found in Corynebacterium jeikeium (strain K411).